Consider the following 278-residue polypeptide: Large ribosomal subunit protein uL2 (278 aa).

A disordered region spans residues 223–278; the sequence is GVAMNPIDHPHGGGEGRTSGGRHPVTPWGFPTKGKKTRSNKRTDTFIVSSRHNRKK.

The protein belongs to the universal ribosomal protein uL2 family. In terms of assembly, part of the 50S ribosomal subunit. Forms a bridge to the 30S subunit in the 70S ribosome.

In terms of biological role, one of the primary rRNA binding proteins. Required for association of the 30S and 50S subunits to form the 70S ribosome, for tRNA binding and peptide bond formation. It has been suggested to have peptidyltransferase activity; this is somewhat controversial. Makes several contacts with the 16S rRNA in the 70S ribosome. The chain is Large ribosomal subunit protein uL2 from Methylobacterium nodulans (strain LMG 21967 / CNCM I-2342 / ORS 2060).